Reading from the N-terminus, the 345-residue chain is Endochitinase 4 (345 aa).

Positions 1 to 27 (MAPLLNTGLVILPLIVSTLLGPMPAFA) are cleaved as a signal peptide. N-linked (GlcNAc...) asparagine glycosylation is found at asparagine 29 and asparagine 89. The GH18 domain maps to 41-345 (KVLQGYWENW…TFGDNVKGRL (305 aa)). The active-site Proton donor is the glutamate 163. The N-linked (GlcNAc...) asparagine glycan is linked to asparagine 316.

The protein belongs to the glycosyl hydrolase 18 family. Chitinase class V subfamily.

It is found in the secreted. The enzyme catalyses Random endo-hydrolysis of N-acetyl-beta-D-glucosaminide (1-&gt;4)-beta-linkages in chitin and chitodextrins.. Secreted chitinase involved in the degradation of chitin, a component of the cell walls of fungi and exoskeletal elements of some animals (including worms and arthropods). Participates in the infection process and directly acts in the penetration process of the host cuticle. The sequence is that of Endochitinase 4 (chi4) from Metarhizium robertsii (strain ARSEF 23 / ATCC MYA-3075) (Metarhizium anisopliae (strain ARSEF 23)).